Consider the following 745-residue polypeptide: Chitin synthase D (745 aa).

5 helical membrane passes run 26–46 (LAHR…PVHL), 55–75 (VLML…IPWL), 412–432 (TTAL…SSIN), 434–454 (LPVG…FYLG), and 464–484 (LFPL…VYGI). 2 disordered regions span residues 613-635 (TGDN…SLHQ) and 672-745 (ILPH…ESMV). Residues 707 to 720 (NASTRGSMEGNTPE) are compositionally biased toward polar residues.

The protein belongs to the chitin synthase family. Class VI subfamily.

The protein localises to the cell membrane. It carries out the reaction [(1-&gt;4)-N-acetyl-beta-D-glucosaminyl](n) + UDP-N-acetyl-alpha-D-glucosamine = [(1-&gt;4)-N-acetyl-beta-D-glucosaminyl](n+1) + UDP + H(+). Functionally, polymerizes chitin, a structural polymer of the cell wall and septum, by transferring the sugar moiety of UDP-GlcNAc to the non-reducing end of the growing chitin polymer. This Aspergillus fumigatus (strain ATCC MYA-4609 / CBS 101355 / FGSC A1100 / Af293) (Neosartorya fumigata) protein is Chitin synthase D (chsD).